The chain runs to 172 residues: Large ribosomal subunit protein uL10 (172 aa).

It belongs to the universal ribosomal protein uL10 family. Part of the ribosomal stalk of the 50S ribosomal subunit. The N-terminus interacts with L11 and the large rRNA to form the base of the stalk. The C-terminus forms an elongated spine to which L12 dimers bind in a sequential fashion forming a multimeric L10(L12)X complex.

Its function is as follows. Forms part of the ribosomal stalk, playing a central role in the interaction of the ribosome with GTP-bound translation factors. This chain is Large ribosomal subunit protein uL10, found in Caulobacter sp. (strain K31).